We begin with the raw amino-acid sequence, 147 residues long: Large ribosomal subunit protein uL13 (147 aa).

The disordered stretch occupies residues 128-147 (DQHPHGAQQPQPFEITQVAQ).

This sequence belongs to the universal ribosomal protein uL13 family. Part of the 50S ribosomal subunit.

This protein is one of the early assembly proteins of the 50S ribosomal subunit, although it is not seen to bind rRNA by itself. It is important during the early stages of 50S assembly. The protein is Large ribosomal subunit protein uL13 of Streptomyces coelicolor (strain ATCC BAA-471 / A3(2) / M145).